Consider the following 831-residue polypeptide: Vi polysaccharide biosynthesis protein TviD (831 aa).

Its pathway is glycan metabolism; Vi-antigen biosynthesis. It participates in capsule biogenesis; capsule polysaccharide biosynthesis. Its function is as follows. May be required for maturation of the Vi polysaccharide. The polypeptide is Vi polysaccharide biosynthesis protein TviD (tviD) (Salmonella typhi).